The sequence spans 361 residues: tRNA/tmRNA (uracil-C(5))-methyltransferase (361 aa).

The S-adenosyl-L-methionine site is built by Q183, Y211, N216, E232, and D294. The active-site Nucleophile is C319. The active-site Proton acceptor is the E353.

This sequence belongs to the class I-like SAM-binding methyltransferase superfamily. RNA M5U methyltransferase family. TrmA subfamily.

The catalysed reaction is uridine(54) in tRNA + S-adenosyl-L-methionine = 5-methyluridine(54) in tRNA + S-adenosyl-L-homocysteine + H(+). It catalyses the reaction uridine(341) in tmRNA + S-adenosyl-L-methionine = 5-methyluridine(341) in tmRNA + S-adenosyl-L-homocysteine + H(+). In terms of biological role, dual-specificity methyltransferase that catalyzes the formation of 5-methyluridine at position 54 (m5U54) in all tRNAs, and that of position 341 (m5U341) in tmRNA (transfer-mRNA). The sequence is that of tRNA/tmRNA (uracil-C(5))-methyltransferase from Acinetobacter baumannii (strain AYE).